A 244-amino-acid polypeptide reads, in one-letter code: Probable transcriptional regulatory protein DNO_1179 (244 aa).

Belongs to the TACO1 family.

Its subcellular location is the cytoplasm. This chain is Probable transcriptional regulatory protein DNO_1179, found in Dichelobacter nodosus (strain VCS1703A).